A 361-amino-acid polypeptide reads, in one-letter code: D-alanine--D-alanine ligase (361 aa).

The ATP-grasp domain occupies 144–350; sequence KLAAADAGLA…FMELTDRLIR (207 aa). Residue 177–232 coordinates ATP; sequence VASLSFPMFVKPVSLGSSVGITKVNSESELAEAITHACSLDSKVLIEQAVKGREVE. 3 residues coordinate Mg(2+): aspartate 303, glutamate 317, and asparagine 319.

This sequence belongs to the D-alanine--D-alanine ligase family. Mg(2+) serves as cofactor. Mn(2+) is required as a cofactor.

The protein resides in the cytoplasm. It carries out the reaction 2 D-alanine + ATP = D-alanyl-D-alanine + ADP + phosphate + H(+). It functions in the pathway cell wall biogenesis; peptidoglycan biosynthesis. In terms of biological role, cell wall formation. In Chlorobium luteolum (strain DSM 273 / BCRC 81028 / 2530) (Pelodictyon luteolum), this protein is D-alanine--D-alanine ligase.